The primary structure comprises 320 residues: Aspartate carbamoyltransferase catalytic subunit (320 aa).

Residues arginine 68 and threonine 69 each coordinate carbamoyl phosphate. Lysine 96 contributes to the L-aspartate binding site. Residues arginine 118, histidine 148, and glutamine 151 each coordinate carbamoyl phosphate. Residues arginine 181 and arginine 236 each coordinate L-aspartate. Carbamoyl phosphate contacts are provided by glycine 277 and proline 278.

Belongs to the aspartate/ornithine carbamoyltransferase superfamily. ATCase family. In terms of assembly, heterododecamer (2C3:3R2) of six catalytic PyrB chains organized as two trimers (C3), and six regulatory PyrI chains organized as three dimers (R2).

It carries out the reaction carbamoyl phosphate + L-aspartate = N-carbamoyl-L-aspartate + phosphate + H(+). It participates in pyrimidine metabolism; UMP biosynthesis via de novo pathway; (S)-dihydroorotate from bicarbonate: step 2/3. Its function is as follows. Catalyzes the condensation of carbamoyl phosphate and aspartate to form carbamoyl aspartate and inorganic phosphate, the committed step in the de novo pyrimidine nucleotide biosynthesis pathway. The sequence is that of Aspartate carbamoyltransferase catalytic subunit from Paracidovorax citrulli (strain AAC00-1) (Acidovorax citrulli).